The chain runs to 510 residues: NAD(P)H-quinone oxidoreductase subunit 2, chloroplastic (510 aa).

A run of 11 helical transmembrane segments spans residues 24–44 (LLLF…GLIL), 59–79 (WFYF…LFRW), 99–119 (IFQF…VEYI), 124–144 (MAIT…MFLC), 149–169 (LITI…LSGY), 183–203 (YLLM…WLYG), 295–315 (WHLL…LIAI), 323–343 (MLAY…IVGD), 347–367 (GYAS…GTFA), 395–415 (ALSS…AGFF), and 418–438 (LHLF…IGLL).

It belongs to the complex I subunit 2 family. In terms of assembly, NDH is composed of at least 16 different subunits, 5 of which are encoded in the nucleus.

Its subcellular location is the plastid. It is found in the chloroplast thylakoid membrane. The enzyme catalyses a plastoquinone + NADH + (n+1) H(+)(in) = a plastoquinol + NAD(+) + n H(+)(out). The catalysed reaction is a plastoquinone + NADPH + (n+1) H(+)(in) = a plastoquinol + NADP(+) + n H(+)(out). Functionally, NDH shuttles electrons from NAD(P)H:plastoquinone, via FMN and iron-sulfur (Fe-S) centers, to quinones in the photosynthetic chain and possibly in a chloroplast respiratory chain. The immediate electron acceptor for the enzyme in this species is believed to be plastoquinone. Couples the redox reaction to proton translocation, and thus conserves the redox energy in a proton gradient. This is NAD(P)H-quinone oxidoreductase subunit 2, chloroplastic from Maianthemum racemosum (False Solomon's-seal).